Here is a 301-residue protein sequence, read N- to C-terminus: Nucleotide-binding protein Helmi_06460 (301 aa).

Glycine 17 to serine 24 contributes to the ATP binding site. GTP is bound at residue aspartate 68–glycine 71.

It belongs to the RapZ-like family.

In terms of biological role, displays ATPase and GTPase activities. This Heliobacterium modesticaldum (strain ATCC 51547 / Ice1) protein is Nucleotide-binding protein Helmi_06460.